Here is a 1295-residue protein sequence, read N- to C-terminus: DNA-directed RNA polymerase subunit beta' (1295 aa).

Residues Cys60, Cys62, Cys75, and Cys78 each contribute to the Zn(2+) site. Residues Asp516, Asp518, and Asp520 each coordinate Mg(2+). Zn(2+)-binding residues include Cys841, Cys914, Cys921, and Cys924.

It belongs to the RNA polymerase beta' chain family. In terms of assembly, the RNAP catalytic core consists of 2 alpha, 1 beta, 1 beta' and 1 omega subunit. When a sigma factor is associated with the core the holoenzyme is formed, which can initiate transcription. Mg(2+) is required as a cofactor. Requires Zn(2+) as cofactor.

It carries out the reaction RNA(n) + a ribonucleoside 5'-triphosphate = RNA(n+1) + diphosphate. In terms of biological role, DNA-dependent RNA polymerase catalyzes the transcription of DNA into RNA using the four ribonucleoside triphosphates as substrates. In Dehalococcoides mccartyi (strain CBDB1), this protein is DNA-directed RNA polymerase subunit beta'.